The primary structure comprises 79 residues: MWYELTSAKTNESLPRSTRMYSGGNLKNAQFSLLSSRELVNSYFDVNSGGGLDGVLSINRSSFIFCTTEVILGIGVRIR.

This chain is Protein B6 (B6), found in Human herpesvirus 6B (strain Z29) (HHV-6 variant B).